The chain runs to 1306 residues: Angiotensin-converting enzyme (1306 aa).

Residues 1 to 29 form the signal peptide; the sequence is MGAASGRRGPGLLLPLPLLLLLPPQPALA. At 30–1256 the chain is on the extracellular side; sequence LDPGLQPGNF…GLDLDAQQAR (1227 aa). N38, N54, N74, E103, N111, I121, Y140, N146, and N160 each carry an N-linked (GlcNAc...) asparagine glycan. 2 consecutive Peptidase M2 domains span residues 40–624 and 643–1222; these read SADE…LGWP and VTDE…LGWP. The cysteines at positions 157 and 165 are disulfide-linked. Residue Y231 coordinates chloride. N318 and N368 each carry an N-linked (GlcNAc...) asparagine glycan. C359 and C377 form a disulfide bridge. H390 is a Zn(2+) binding site. The active-site Proton acceptor 1 is the E391. Positions 394, 414, 418, and 442 each coordinate Zn(2+). N445 and N509 each carry an N-linked (GlcNAc...) asparagine glycan. The Proton donor 1 role is filled by H520. R529 is a binding site for chloride. C545 and C557 are oxidised to a cystine. N-linked (GlcNAc...) asparagine glycans are attached at residues N617 and N677. N695 and N714 each carry an N-linked (GlcNAc...) (complex) asparagine glycan. Cysteines 757 and 763 form a disulfide. An N-linked (GlcNAc...) asparagine; partial glycan is attached at N760. Chloride-binding residues include R791 and Y829. N942 carries N-linked (GlcNAc...) asparagine; partial glycosylation. A disulfide bond links C957 and C975. H988 provides a ligand contact to Zn(2+). Catalysis depends on E989, which acts as the Proton acceptor 2. Zn(2+) is bound by residues H992 and E1016. Chloride contacts are provided by W1090 and R1094. H1118 functions as the Proton donor 2 in the catalytic mechanism. R1127 is a binding site for chloride. A disulfide bond links C1143 and C1155. The N-linked (GlcNAc...) asparagine; partial glycan is linked to N1191. A juxtamembrane stalk region spans residues 1215-1256; that stretch reads HGEKLGWPQYNWTPNSARSEGPLPDSGRVSFLGLDLDAQQAR. The helical transmembrane segment at 1257 to 1277 threads the bilayer; it reads VGQWLLLFLGIALLVATLGLS. Topologically, residues 1278 to 1306 are cytoplasmic; that stretch reads QRLFSIRHRSLHRHSHGPQFGSEVELRHS. At S1299 the chain carries Phosphoserine.

This sequence belongs to the peptidase M2 family. Monomer and homodimer; homodimerizes following binding to an inhibitor. Interacts with calmodulin (CALM1, CALM2 or CALM3); interaction takes place in the cytoplasmic region and regulates phosphorylation and proteolytic cleavage. Requires Zn(2+) as cofactor. Chloride serves as cofactor. Post-translationally, produced following proteolytic cleavage by secretase enzymes that cleave the transmembrane form in the juxtamembrane stalk region upstream of the transmembrane region. Cleavage can take place at different sites of the juxtamembrane stalk region. In terms of processing, phosphorylated by CK2 on Ser-1299; which allows membrane retention. Phosphorylated on tyrosine residues on its extracellular part, promoting cleavage by secretase enzymes and formation of the soluble form (Angiotensin-converting enzyme, soluble form). Ubiquitously expressed, with highest levels in lung, kidney, heart, gastrointestinal system and prostate. As to expression, specifically expressed in spermatocytes and adult testis.

The protein localises to the cell membrane. The protein resides in the cytoplasm. It is found in the secreted. The catalysed reaction is Release of a C-terminal dipeptide, oligopeptide-|-Xaa-Yaa, when Xaa is not Pro, and Yaa is neither Asp nor Glu. Thus, conversion of angiotensin I to angiotensin II, with increase in vasoconstrictor activity, but no action on angiotensin II.. It catalyses the reaction angiotensin I + H2O = L-histidyl-L-leucine + angiotensin II. The enzyme catalyses bradykinin + H2O = L-Phe-L-Arg + bradykinin(1-7). It carries out the reaction substance P + H2O = substance P(1-9) + L-Leu-L-Met-NH2. The catalysed reaction is substance P + H2O = substance P(1-8) + Gly-L-Leu-L-Met-NH2. It catalyses the reaction substance P + H2O = L-Phe-L-Phe-Gly-L-Leu-L-Met-NH2 + substance P(1-6). The enzyme catalyses neurotensin + H2O = neurotensin(1-11) + L-isoleucyl-L-leucine. It carries out the reaction goralatide + H2O = N-acetyl-L-seryl-L-aspartate + L-lysyl-L-proline. The catalysed reaction is Met-enkephalin + H2O = L-phenylalanyl-L-methionine + L-tyrosylglycylglycine. It catalyses the reaction Leu-enkephalin + H2O = L-tyrosylglycylglycine + L-phenylalanyl-L-leucine. The enzyme catalyses Met-enkephalin-Arg-Phe + H2O = L-arginyl-L-phenylalanine + Met-enkephalin. The dipeptidyl carboxypeptidase activity is strongly activated by chloride. The dipeptidyl carboxypeptidase activity is specifically inhibited by lisinopril, captopril and enalaprilat. Its activity is regulated as follows. Strongly inhibited by lisinopril and captopril. Functionally, dipeptidyl carboxypeptidase that removes dipeptides from the C-terminus of a variety of circulating hormones, such as angiotensin I, bradykinin or enkephalins, thereby playing a key role in the regulation of blood pressure, electrolyte homeostasis or synaptic plasticity. Composed of two similar catalytic domains, each possessing a functional active site, with different selectivity for substrates. Plays a major role in the angiotensin-renin system that regulates blood pressure and sodium retention by the kidney by converting angiotensin I to angiotensin II, resulting in an increase of the vasoconstrictor activity of angiotensin. Also able to inactivate bradykinin, a potent vasodilator, and therefore enhance the blood pressure response. Acts as a regulator of synaptic transmission by mediating cleavage of neuropeptide hormones, such as substance P, neurotensin or enkephalins. Catalyzes degradation of different enkephalin neuropeptides (Met-enkephalin, Leu-enkephalin, Met-enkephalin-Arg-Phe and possibly Met-enkephalin-Arg-Gly-Leu). Acts as a regulator of synaptic plasticity in the nucleus accumbens of the brain by mediating cleavage of Met-enkephalin-Arg-Phe, a strong ligand of Mu-type opioid receptor OPRM1, into Met-enkephalin. Met-enkephalin-Arg-Phe cleavage by ACE decreases activation of OPRM1, leading to long-term synaptic potentiation of glutamate release. Also acts as a regulator of hematopoietic stem cell differentiation by mediating degradation of hemoregulatory peptide N-acetyl-SDKP (AcSDKP). Acts as a regulator of cannabinoid signaling pathway by mediating degradation of hemopressin, an antagonist peptide of the cannabinoid receptor CNR1. Involved in amyloid-beta metabolism by catalyzing degradation of Amyloid-beta protein 40 and Amyloid-beta protein 42 peptides, thereby preventing plaque formation. Catalyzes cleavage of cholecystokinin (maturation of Cholecystokinin-8 and Cholecystokinin-5) and Gonadoliberin-1 (both maturation and degradation) hormones. Degradation of hemoregulatory peptide N-acetyl-SDKP (AcSDKP) and amyloid-beta proteins is mediated by the N-terminal catalytic domain, while angiotensin I and cholecystokinin cleavage is mediated by the C-terminal catalytic region. Soluble form that is released in blood plasma and other body fluids following proteolytic cleavage in the juxtamembrane stalk region. In terms of biological role, isoform produced by alternative promoter usage that is specifically expressed in spermatocytes and adult testis, and which is required for male fertility. In contrast to somatic isoforms, only contains one catalytic domain. Acts as a dipeptidyl carboxypeptidase that removes dipeptides from the C-terminus of substrates. The identity of substrates that are needed for male fertility is unknown. May also have a glycosidase activity which releases GPI-anchored proteins from the membrane by cleaving the mannose linkage in the GPI moiety. The GPIase activity was reported to be essential for the egg-binding ability of the sperm. This activity is however unclear and has been challenged by other groups, suggesting that it may be indirect. The chain is Angiotensin-converting enzyme from Homo sapiens (Human).